The following is a 456-amino-acid chain: RuvB-like 1 (456 aa).

Residues 1-20 (MKIEEVKSTTKTQRIASHSH) form a disordered region. ATP is bound at residue 70 to 77 (GPPGTGKT).

Belongs to the RuvB family. As to quaternary structure, forms homohexameric rings. Can form a dodecamer with ruvbl2 made of two stacked hexameric rings. Is a component of the RNA polymerase II holoenzyme complex. Component of the chromatin-remodeling Ino80 complex. Component of some MLL1/MLL complex.

The protein resides in the nucleus. The protein localises to the dynein axonemal particle. It carries out the reaction ATP + H2O = ADP + phosphate + H(+). Has single-stranded DNA-stimulated ATPase and ATP-dependent DNA helicase (3' to 5') activity suggesting a role in nuclear processes such as recombination and transcription. Proposed core component of the chromatin remodeling Ino80 complex which exhibits DNA- and nucleosome-activated ATPase activity and catalyzes ATP-dependent nucleosome sliding. May act as a negative regulator of embryonic heart growth. The protein is RuvB-like 1 (ruvbl1) of Danio rerio (Zebrafish).